Consider the following 172-residue polypeptide: Epididymal secretory protein 4 (172 aa).

The N-terminal stretch at 1-21 (MIAVLLLVFGMTPDYIFPVSA) is a signal peptide. Residues Cys82 and Cys167 are joined by a disulfide bond.

It belongs to the calycin superfamily. Lipocalin family. Secreted by the epididymal epithelial cells.

The protein localises to the secreted. It localises to the extracellular space. Functionally, could transport small hydrophobic molecules into the epididymal fluid during the sperm maturation. Binds to the head region of spermatozoa and plays a key role in sperm maturation. The sequence is that of Epididymal secretory protein 4 from Zootoca vivipara (Common lizard).